A 219-amino-acid chain; its full sequence is uncharacterized protein (219 aa).

The signal sequence occupies residues 1-15 (MYVLFLLSWVLVAGA). A glycan (N-linked (GlcNAc...) asparagine) is linked at N118. The tract at residues 138 to 174 (GEVGEDPGKRARKRRLGLPIGEPGEDVGKRMRQRQQG) is disordered.

As to expression, component of the acid-insoluble and acid-soluble organic matrix of calcified layers of the shell (at protein level).

Its subcellular location is the secreted. This is an uncharacterized protein from Lottia gigantea (Giant owl limpet).